Consider the following 335-residue polypeptide: Vitamin B12 import system permease protein BtuC (335 aa).

8 helical membrane passes run 25 to 45 (LVVM…VWIW), 67 to 87 (MAVI…QALF), 94 to 113 (PGLL…AVLL), 117 to 139 (LLPI…SILL), 153 to 173 (LLVG…AVYF), 243 to 263 (VLAI…ISFI), 281 to 301 (RLLA…DVVA), and 309 to 329 (ELPI…WLLI).

The protein belongs to the binding-protein-dependent transport system permease family. FecCD subfamily. In terms of assembly, the complex is composed of two ATP-binding proteins (BtuD), two transmembrane proteins (BtuC) and a solute-binding protein (BtuF).

The protein localises to the cell inner membrane. In terms of biological role, part of the ABC transporter complex BtuCDF involved in vitamin B12 import. Involved in the translocation of the substrate across the membrane. This Yersinia pseudotuberculosis serotype O:1b (strain IP 31758) protein is Vitamin B12 import system permease protein BtuC.